A 160-amino-acid chain; its full sequence is Transcriptional repressor NrdR (160 aa).

The segment at 3–34 (CPYCQYEDTQVKDSRPSEEGTVIRRRRICSVC) is a zinc-finger region. One can recognise an ATP-cone domain in the interval 49–139 (LLVLKKSGRY…VYRDFRNASD (91 aa)).

This sequence belongs to the NrdR family. Zn(2+) is required as a cofactor.

Functionally, negatively regulates transcription of bacterial ribonucleotide reductase nrd genes and operons by binding to NrdR-boxes. This chain is Transcriptional repressor NrdR, found in Bartonella henselae (strain ATCC 49882 / DSM 28221 / CCUG 30454 / Houston 1) (Rochalimaea henselae).